The sequence spans 795 residues: MAPSQKRKSLPDDDFIHTISDNDEPDILDEEEETVPAAVAGRPNKKARTAGAGAVKGKKNKKEKKGKKGGKSAAAGGDGEDGDEEEEEEVTGLWGANDADDGAMDSDFEFVAGGGGEDGLSGFDEEGWGFENAKKGVVGAGGAGQEVKSGVDLDEIIRRRREKKKGKGLEKVEEEEVEVEDMGEVDLDLDDEVLAEDGFGMGMEDGEGGVDEEDKGGEDDDEAASDNDSVATPVQHPDDEASEDDDEEDAEEEARRKEFFAAPEETENVGKKGGLSSFQGMSLSRPILRGLTSVGFTKPTPIQAKTIPIALMGKDVVGGAVTGSGKTAAFVVPILERLLYRPKKVPTTRVVVLTPTRELAIQCHSVATKLASHTDIKFCLAVGGLSLKVQEGELRLRPDVVIATPGRFIDHMRNSASFAVETVEILVLDEADRMLEDGFADELNEILTTLPKSRQTMLFSATMTSTVDKLIRVGLNKPARIMVDSQKQTAVTLAQEFVRLRPGREEKRMGYLGPYLQDPVHRTSHYLLQAEEDCSPDPDHLRLAGAFEHRAPWKHEPGSAFRDGKVNYLLATDLASRGLDIKGIDTVINYEAPQSLEIYVHRVGRTARAGRSGVAITLAAEPDRKVVKAAVRAGKAQGAKIISRVIDAADADKWQDQIDEMDDEIDEILQEEKEEKQLAQIEMQVKKGENLIKHEEEIHARPKRTWFETQEDKKKAKELGRAELNGVRDAMKKKGAGRLSNKDKKKLDSKAERSESKSTGWKKGRAERDGKGAVLNLKKVTKPKSKAPAGRKGRR.

Disordered stretches follow at residues methionine 1–glycine 127 and glutamate 162–serine 276. Residues aspartate 21 to threonine 34 show a composition bias toward acidic residues. Over residues lysine 56–glycine 70 the composition is skewed to basic residues. Acidic residues-rich tracts occupy residues aspartate 78–valine 90, aspartate 98–phenylalanine 108, valine 172–alanine 195, glutamate 204–serine 225, and glutamate 240–glutamate 252. Residues serine 276 to alanine 304 carry the Q motif motif. Positions isoleucine 307 to isoleucine 481 constitute a Helicase ATP-binding domain. Alanine 320–threonine 327 provides a ligand contact to ATP. The short motif at aspartate 429–aspartate 432 is the DEAD box element. Residues threonine 466 to glutamine 684 form the Helicase C-terminal domain. Residues lysine 703–arginine 795 form a disordered region. Basic and acidic residues-rich tracts occupy residues glutamine 710–arginine 721 and serine 740–serine 756. A compositionally biased stretch (basic residues) spans lysine 779–arginine 795.

The protein belongs to the DEAD box helicase family. DDX27/DRS1 subfamily. As to quaternary structure, associates with pre-ribosomal particles.

It is found in the nucleus. Its subcellular location is the nucleolus. It carries out the reaction ATP + H2O = ADP + phosphate + H(+). In terms of biological role, ATP-binding RNA helicase involved in ribosome assembly. This chain is ATP-dependent RNA helicase DRS1 (DRS1), found in Chaetomium globosum (strain ATCC 6205 / CBS 148.51 / DSM 1962 / NBRC 6347 / NRRL 1970) (Soil fungus).